Consider the following 312-residue polypeptide: Methionyl-tRNA formyltransferase (312 aa).

107-110 (SLLP) lines the (6S)-5,6,7,8-tetrahydrofolate pocket.

Belongs to the Fmt family.

The catalysed reaction is L-methionyl-tRNA(fMet) + (6R)-10-formyltetrahydrofolate = N-formyl-L-methionyl-tRNA(fMet) + (6S)-5,6,7,8-tetrahydrofolate + H(+). Its function is as follows. Attaches a formyl group to the free amino group of methionyl-tRNA(fMet). The formyl group appears to play a dual role in the initiator identity of N-formylmethionyl-tRNA by promoting its recognition by IF2 and preventing the misappropriation of this tRNA by the elongation apparatus. The chain is Methionyl-tRNA formyltransferase from Borreliella burgdorferi (strain ZS7) (Borrelia burgdorferi).